Reading from the N-terminus, the 430-residue chain is Serine--tRNA ligase (430 aa).

237 to 239 (TAE) is an L-serine binding site. 268 to 270 (RSE) provides a ligand contact to ATP. L-serine is bound at residue glutamate 291. 355–358 (EISS) serves as a coordination point for ATP. Residue serine 391 coordinates L-serine.

The protein belongs to the class-II aminoacyl-tRNA synthetase family. Type-1 seryl-tRNA synthetase subfamily. As to quaternary structure, homodimer. The tRNA molecule binds across the dimer.

The protein resides in the cytoplasm. The enzyme catalyses tRNA(Ser) + L-serine + ATP = L-seryl-tRNA(Ser) + AMP + diphosphate + H(+). It carries out the reaction tRNA(Sec) + L-serine + ATP = L-seryl-tRNA(Sec) + AMP + diphosphate + H(+). Its pathway is aminoacyl-tRNA biosynthesis; selenocysteinyl-tRNA(Sec) biosynthesis; L-seryl-tRNA(Sec) from L-serine and tRNA(Sec): step 1/1. In terms of biological role, catalyzes the attachment of serine to tRNA(Ser). Is also able to aminoacylate tRNA(Sec) with serine, to form the misacylated tRNA L-seryl-tRNA(Sec), which will be further converted into selenocysteinyl-tRNA(Sec). This chain is Serine--tRNA ligase, found in Salmonella schwarzengrund (strain CVM19633).